The primary structure comprises 314 residues: tRNA-cytidine(32) 2-sulfurtransferase (314 aa).

The short motif at 49 to 54 (SGGKDS) is the PP-loop motif element. Residues cysteine 124, cysteine 127, and cysteine 215 each coordinate [4Fe-4S] cluster.

The protein belongs to the TtcA family. In terms of assembly, homodimer. The cofactor is Mg(2+). [4Fe-4S] cluster serves as cofactor.

The protein resides in the cytoplasm. The enzyme catalyses cytidine(32) in tRNA + S-sulfanyl-L-cysteinyl-[cysteine desulfurase] + AH2 + ATP = 2-thiocytidine(32) in tRNA + L-cysteinyl-[cysteine desulfurase] + A + AMP + diphosphate + H(+). Its pathway is tRNA modification. In terms of biological role, catalyzes the ATP-dependent 2-thiolation of cytidine in position 32 of tRNA, to form 2-thiocytidine (s(2)C32). The sulfur atoms are provided by the cysteine/cysteine desulfurase (IscS) system. The chain is tRNA-cytidine(32) 2-sulfurtransferase from Pasteurella multocida (strain Pm70).